A 974-amino-acid chain; its full sequence is UvrABC system protein A (974 aa).

Residue G34–S41 participates in ATP binding. ABC transporter domains lie at W331–L610 and I630–K959. An ATP-binding site is contributed by G663–S670. Residues C762–C788 form a C4-type zinc finger.

The protein belongs to the ABC transporter superfamily. UvrA family. Forms a heterotetramer with UvrB during the search for lesions.

The protein resides in the cytoplasm. In terms of biological role, the UvrABC repair system catalyzes the recognition and processing of DNA lesions. UvrA is an ATPase and a DNA-binding protein. A damage recognition complex composed of 2 UvrA and 2 UvrB subunits scans DNA for abnormalities. When the presence of a lesion has been verified by UvrB, the UvrA molecules dissociate. The protein is UvrABC system protein A of Brucella suis biovar 1 (strain 1330).